The sequence spans 1090 residues: MAQPRIPAARGAAASLQAQNGAASASGSPYTNGPVHNTLMSPQVSSSQGYDSQPPGSYPRPMPAKTLNPFSAQSNYGGSQGSGQTLNSPLVTSGPVLPSLHSGPVPRMPLPTSQNPAATPMPSGSFLPGANPPPPLNWQYNYPSTGPQTNHFPHVAPPTLPGNPNLTADHQYVSSGDPALQTSFKKPGSALPLQNPPLPPTFQPGAPPGPPPAGGPPPSRGPAPQKTPPRAAPPPSFNSAVNQEGITSNANNGSTAAHNTYDEIEGGGFLATPQLVNQNPKTSRSVGSAYPSLPPGYQNSAPPVAGMPPPSLSYPSGPQAFTQTPLGANHLTASMSGLSLHPEGLRVVNLLQERNMLPSTPLQPPVPNLLEDIQKLNCNPELFRCTLTSVPQTQALLNKAKLPLGLLLHPFKDLVQLPVVTSSTIVRCRSCRTYINPFVNFLDQRRWKCNLCYRVNDVPEEFMYNPLTRVYGEPHKRPEVQNATIEFMAPSEYMLRPPQPPVYLFVFDVSHNAIETGYLNSVCQSLLDNLDLLPGNTRTKIGFITFDSTIHFYSLQEGLSQPQMLIVSDIDDVFIPMPENLLVNLNESKELVQDLLKTLPQMFTKTLETQSALGPALQAAFKLISPTGGRMSVFQTQLPTLGVGALKPREEPNQRSSAKEIHLTPSTDFYKKLALDCSGQQAAVDLFLLSGQYSDLASLGCISRYSAGSVYYYPSYHHQHNPVQVQKLQKELHRYLTRKIGFEAVMRIRCTKGLSIHTFHGNFFVRSTDLLSLPNVNPDAGYAVQMSVEESLTDTQLVSFQSALLYTSSKGERRIRVHTLCLPVVSTLNEVFLGADVQAISGLLANMAVDRSVTASLSDARDALVNAVIDSLSAYRSSVLSGQQPGLMVPFSLRLFPLFVLALLKQKSFQTGTSIRLDERIFAMCQVKSQPLVHLMLTTHPSLYRVDNLSDEGALNINDRTIPQPPILQLSVEKLSRDGAFLMDAGSLLMLWVGRNCSQNFLSQVLGVQNYASIPQTMTDLPELDTPESARIAAFISWLREQRPFFPVLYVIREESLMKAAFLQSLVEDRTESALSYYEFLLHIQQQVNK.

2 disordered regions span residues 1 to 260 and 272 to 325; these read MAQP…AHNT and TPQL…TQTP. A compositionally biased stretch (low complexity) spans 8 to 28; the sequence is AARGAAASLQAQNGAASASGS. 3 stretches are compositionally biased toward polar residues: residues 29-55, 138-151, and 162-184; these read PYTN…SQPP, WQYN…QTNH, and GNPN…QTSF. Residues 194–236 are compositionally biased toward pro residues; it reads QNPPLPPTFQPGAPPGPPPAGGPPPSRGPAPQKTPPRAAPPPS. Composition is skewed to polar residues over residues 237–258, 274–286, and 313–325; these read FNSA…TAAH, QLVN…SRSV, and SYPS…TQTP. Residues C428, C431, C449, and C452 each coordinate Zn(2+). Residues 428-452 form a zinc finger-like region; that stretch reads CRSCRTYINPFVNFLDQRRWKCNLC. One copy of the Gelsolin-like repeat lies at 963–1036; the sequence is PQPPILQLSV…PESARIAAFI (74 aa).

The protein belongs to the SEC23/SEC24 family. SEC24 subfamily. In terms of assembly, COPII is composed of at least five proteins: the Sec23/24 complex, the Sec13/31 complex and Sar1. Interacts with TMED2. Interacts (as part of the Sec23/24 complex) with SEC22B; recruits SEC22B into COPII-coated vesicles for its transport from the endoplasmic reticulum to the Golgi. Interacts with STING1; promoting STING1 translocation to COPII vesicles in a STEEP1-dependent manner. Interacts with TMEM39A. Interacts with SACM1L; this interaction is reduced in the absence of TMEM39A. Interacts with kinase FAM20C; transport of FAM20C from the endoplasmic reticulum to the Golgi is likely to be mediated by COPII vesicles.

It is found in the cytoplasmic vesicle. The protein localises to the COPII-coated vesicle membrane. The protein resides in the endoplasmic reticulum membrane. Its subcellular location is the cytoplasm. It localises to the cytosol. Functionally, component of the coat protein complex II (COPII) which promotes the formation of transport vesicles from the endoplasmic reticulum (ER). The coat has two main functions, the physical deformation of the endoplasmic reticulum membrane into vesicles and the selection of cargo molecules for their transport to the Golgi complex. Plays a central role in cargo selection within the COPII complex and together with SEC24B may have a different specificity compared to SEC24C and SEC24D. May package preferentially cargos with cytoplasmic DxE or LxxLE motifs and may also recognize conformational epitopes. This chain is Protein transport protein Sec24A, found in Mus musculus (Mouse).